We begin with the raw amino-acid sequence, 140 residues long: Small ribosomal subunit protein uS12 (140 aa).

Residues 1–20 form a disordered region; that stretch reads MPTINQLVRKGRQSKVVKSD. Asp-102 is subject to 3-methylthioaspartic acid. The disordered stretch occupies residues 121–140; it reads DGRMQGRSKYGTKRPKAAKK. The segment covering 130-140 has biased composition (basic residues); it reads YGTKRPKAAKK.

It belongs to the universal ribosomal protein uS12 family. In terms of assembly, part of the 30S ribosomal subunit. Contacts proteins S8 and S17. May interact with IF1 in the 30S initiation complex.

Functionally, with S4 and S5 plays an important role in translational accuracy. Its function is as follows. Interacts with and stabilizes bases of the 16S rRNA that are involved in tRNA selection in the A site and with the mRNA backbone. Located at the interface of the 30S and 50S subunits, it traverses the body of the 30S subunit contacting proteins on the other side and probably holding the rRNA structure together. The combined cluster of proteins S8, S12 and S17 appears to hold together the shoulder and platform of the 30S subunit. The polypeptide is Small ribosomal subunit protein uS12 (Exiguobacterium sibiricum (strain DSM 17290 / CCUG 55495 / CIP 109462 / JCM 13490 / 255-15)).